We begin with the raw amino-acid sequence, 177 residues long: Parathyroid hormone-related protein (177 aa).

Positions 1-24 (MLRRLVQQWSVAVFLLSYSVPSCG) are cleaved as a signal peptide. Residues 25-34 (RSVEGPGRRL) constitute a propeptide that is removed on maturation. The segment at 57–68 (RFFLHHLIAEIH) is important for receptor binding. The tract at residues 74–177 (ATSEVSPNSK…PEPELDSRRH (104 aa)) is disordered. The span at 76–90 (SEVSPNSKPAANTKN) shows a compositional bias: polar residues. Residues 108-129 (TNKVEPYKEQPLKTPGKKKKGK) carry the Nuclear localization signal motif. Residues 109–118 (NKVEPYKEQP) are compositionally biased toward basic and acidic residues. Residues 122–132 (PGKKKKGKPGK) show a composition bias toward basic residues.

The protein belongs to the parathyroid hormone family. In terms of assembly, PTHrP interacts with PTH1R (via N-terminal extracellular domain). There are several secretory forms, including osteostatin, arising from endoproteolytic cleavage of the initial translation product. Each of these secretory forms is believed to have one or more of its own receptors that mediates the normal paracrine, autocrine and endocrine actions.

The protein localises to the secreted. Its subcellular location is the cytoplasm. It localises to the nucleus. Neuroendocrine peptide which is a critical regulator of cellular and organ growth, development, migration, differentiation and survival and of epithelial calcium ion transport. Acts by binding to its receptor, PTH1R, activating G protein-coupled receptor signaling. Regulates endochondral bone development and epithelial-mesenchymal interactions during the formation of the mammary glands and teeth. Required for skeletal homeostasis. Promotes mammary mesenchyme differentiation and bud outgrowth by modulating mesenchymal cell responsiveness to BMPs. Up-regulates BMPR1A expression in the mammary mesenchyme and this increases the sensitivity of these cells to BMPs and allows them to respond to BMP4 in a paracrine and/or autocrine fashion. BMP4 signaling in the mesenchyme, in turn, triggers epithelial outgrowth and augments MSX2 expression, which causes the mammary mesenchyme to inhibit hair follicle formation within the nipple sheath. Functionally, potent inhibitor of osteoclastic bone resorption. In Oryctolagus cuniculus (Rabbit), this protein is Parathyroid hormone-related protein (PTHLH).